Here is a 221-residue protein sequence, read N- to C-terminus: Large ribosomal subunit protein uL4 (221 aa).

Residues 47–77 (GTASTKTRGEVSGGGRKPWIQKHTGRARQGS) form a disordered region.

This sequence belongs to the universal ribosomal protein uL4 family. In terms of assembly, part of the 50S ribosomal subunit.

Its function is as follows. One of the primary rRNA binding proteins, this protein initially binds near the 5'-end of the 23S rRNA. It is important during the early stages of 50S assembly. It makes multiple contacts with different domains of the 23S rRNA in the assembled 50S subunit and ribosome. Forms part of the polypeptide exit tunnel. This chain is Large ribosomal subunit protein uL4, found in Thermosipho melanesiensis (strain DSM 12029 / CIP 104789 / BI429).